A 122-amino-acid chain; its full sequence is Large ribosomal subunit protein uL14 (122 aa).

It belongs to the universal ribosomal protein uL14 family. Part of the 50S ribosomal subunit. Forms a cluster with proteins L3 and L19. In the 70S ribosome, L14 and L19 interact and together make contacts with the 16S rRNA in bridges B5 and B8.

Binds to 23S rRNA. Forms part of two intersubunit bridges in the 70S ribosome. The protein is Large ribosomal subunit protein uL14 of Acetivibrio thermocellus (strain ATCC 27405 / DSM 1237 / JCM 9322 / NBRC 103400 / NCIMB 10682 / NRRL B-4536 / VPI 7372) (Clostridium thermocellum).